Consider the following 579-residue polypeptide: Isocitrate dehydrogenase kinase/phosphatase (579 aa).

Residues 324–330 (ADGTPGM) and lysine 345 contribute to the ATP site. The active site involves aspartate 380.

The protein belongs to the AceK family.

It is found in the cytoplasm. It carries out the reaction L-seryl-[isocitrate dehydrogenase] + ATP = O-phospho-L-seryl-[isocitrate dehydrogenase] + ADP + H(+). Functionally, bifunctional enzyme which can phosphorylate or dephosphorylate isocitrate dehydrogenase (IDH) on a specific serine residue. This is a regulatory mechanism which enables bacteria to bypass the Krebs cycle via the glyoxylate shunt in response to the source of carbon. When bacteria are grown on glucose, IDH is fully active and unphosphorylated, but when grown on acetate or ethanol, the activity of IDH declines drastically concomitant with its phosphorylation. The protein is Isocitrate dehydrogenase kinase/phosphatase of Xanthomonas euvesicatoria pv. vesicatoria (strain 85-10) (Xanthomonas campestris pv. vesicatoria).